The chain runs to 340 residues: Phosphatidylglycerol--prolipoprotein diacylglyceryl transferase (340 aa).

A run of 4 helical transmembrane segments spans residues 19 to 39 (IPLR…VWLG), 54 to 74 (ADIA…YHVI), 93 to 113 (IWEG…GAWI), and 119 to 139 (GIPL…AQAF). Arg141 contacts a 1,2-diacyl-sn-glycero-3-phospho-(1'-sn-glycerol). 3 helical membrane-spanning segments follow: residues 176-196 (HPTF…VIWA), 202-221 (LGHG…GRAW), and 238-258 (LNDW…VLSS). The disordered stretch occupies residues 266–340 (EIVEPGASDT…ESAAESAKKV (75 aa)). The span at 284–294 (DLGKDEDKATT) shows a compositional bias: basic and acidic residues. Positions 295 to 307 (DKATATDTSTTTD) are enriched in low complexity. Residues 326 to 340 (PSEKTESAAESAKKV) are compositionally biased toward basic and acidic residues.

Belongs to the Lgt family.

Its subcellular location is the cell membrane. The enzyme catalyses L-cysteinyl-[prolipoprotein] + a 1,2-diacyl-sn-glycero-3-phospho-(1'-sn-glycerol) = an S-1,2-diacyl-sn-glyceryl-L-cysteinyl-[prolipoprotein] + sn-glycerol 1-phosphate + H(+). Its pathway is protein modification; lipoprotein biosynthesis (diacylglyceryl transfer). Catalyzes the transfer of the diacylglyceryl group from phosphatidylglycerol to the sulfhydryl group of the N-terminal cysteine of a prolipoprotein, the first step in the formation of mature lipoproteins. In Streptomyces avermitilis (strain ATCC 31267 / DSM 46492 / JCM 5070 / NBRC 14893 / NCIMB 12804 / NRRL 8165 / MA-4680), this protein is Phosphatidylglycerol--prolipoprotein diacylglyceryl transferase.